Consider the following 216-residue polypeptide: Ras-related protein RabN1 (216 aa).

15 to 22 (GDYNSGKT) serves as a coordination point for GTP. Positions 37 to 44 (TCPSTFDL) match the Effector region motif. Residues 62–66 (DTAGQ) and 128–131 (TKSD) each bind GTP. Cys216 carries S-geranylgeranyl cysteine lipidation.

The protein belongs to the small GTPase superfamily. Rab family.

It is found in the cell membrane. This chain is Ras-related protein RabN1 (rabN1), found in Dictyostelium discoideum (Social amoeba).